The chain runs to 251 residues: Putative cysteine-rich repeat secretory protein 36 (251 aa).

A signal peptide spans 1–28; that stretch reads MHSSYSLSKCLVCFTILAIQTLIRRVSS. 2 Gnk2-homologous domains span residues 35–139 and 144–248; these read YLNH…NSPP and YENT…LYPF.

The protein belongs to the cysteine-rich repeat secretory protein family.

The protein resides in the secreted. This is Putative cysteine-rich repeat secretory protein 36 (CRRSP36) from Arabidopsis thaliana (Mouse-ear cress).